The chain runs to 414 residues: Putative competence-damage inducible protein (414 aa).

This sequence belongs to the CinA family.

The sequence is that of Putative competence-damage inducible protein from Listeria monocytogenes serotype 4b (strain CLIP80459).